Here is a 664-residue protein sequence, read N- to C-terminus: Fructose-1,6-bisphosphatase class 3 (664 aa).

It belongs to the FBPase class 3 family. Requires Mn(2+) as cofactor.

The enzyme catalyses beta-D-fructose 1,6-bisphosphate + H2O = beta-D-fructose 6-phosphate + phosphate. Its pathway is carbohydrate biosynthesis; gluconeogenesis. This chain is Fructose-1,6-bisphosphatase class 3, found in Bacteroides thetaiotaomicron (strain ATCC 29148 / DSM 2079 / JCM 5827 / CCUG 10774 / NCTC 10582 / VPI-5482 / E50).